Here is a 236-residue protein sequence, read N- to C-terminus: Uridylate kinase (236 aa).

8–11 (KLSG) contacts ATP. Positions 16-21 (GEQGYG) are involved in allosteric activation by GTP. ATP-binding residues include Gly-51 and Arg-55. Residues Asp-70 and 131–138 (TGNPYFST) each bind UMP. ATP is bound by residues Asn-159, Tyr-165, and Asp-168.

The protein belongs to the UMP kinase family. In terms of assembly, homohexamer.

It is found in the cytoplasm. The enzyme catalyses UMP + ATP = UDP + ADP. The protein operates within pyrimidine metabolism; CTP biosynthesis via de novo pathway; UDP from UMP (UMPK route): step 1/1. Its activity is regulated as follows. Allosterically activated by GTP. Inhibited by UTP. Catalyzes the reversible phosphorylation of UMP to UDP. The polypeptide is Uridylate kinase (Shouchella clausii (strain KSM-K16) (Alkalihalobacillus clausii)).